Consider the following 343-residue polypeptide: Dihydroorotate dehydrogenase (quinone) (343 aa).

FMN is bound by residues Ala-65 to Lys-69 and Thr-89. A substrate-binding site is contributed by Lys-69. A substrate-binding site is contributed by Asn-114 to Phe-118. The FMN site is built by Asn-145 and Asn-178. Asn-178 contacts substrate. Residue Ser-181 is the Nucleophile of the active site. Asn-183 provides a ligand contact to substrate. Positions 215 and 243 each coordinate FMN. Asn-244–Thr-245 contributes to the substrate binding site. Residues Gly-269, Gly-298, and Tyr-319–Thr-320 contribute to the FMN site.

Belongs to the dihydroorotate dehydrogenase family. Type 2 subfamily. In terms of assembly, monomer. FMN is required as a cofactor.

Its subcellular location is the cell membrane. The enzyme catalyses (S)-dihydroorotate + a quinone = orotate + a quinol. It participates in pyrimidine metabolism; UMP biosynthesis via de novo pathway; orotate from (S)-dihydroorotate (quinone route): step 1/1. Catalyzes the conversion of dihydroorotate to orotate with quinone as electron acceptor. This is Dihydroorotate dehydrogenase (quinone) from Leifsonia xyli subsp. xyli (strain CTCB07).